A 268-amino-acid polypeptide reads, in one-letter code: Non-homologous end joining protein Ku (268 aa).

The 163-residue stretch at 13 to 175 (VSLVTCPVTM…TLHDGNAVRN (163 aa)) folds into the Ku domain. The tract at residues 174 to 194 (RNGGHPAARTRPASEAESADS) is disordered.

The protein belongs to the prokaryotic Ku family. In terms of assembly, homodimer. Interacts with LigD.

Its function is as follows. With LigD forms a non-homologous end joining (NHEJ) DNA repair enzyme, which repairs dsDNA breaks with reduced fidelity. Binds linear dsDNA with 5'- and 3'- overhangs but not closed circular dsDNA nor ssDNA. Recruits and stimulates the ligase activity of LigD. This Gluconacetobacter diazotrophicus (strain ATCC 49037 / DSM 5601 / CCUG 37298 / CIP 103539 / LMG 7603 / PAl5) protein is Non-homologous end joining protein Ku.